Here is a 426-residue protein sequence, read N- to C-terminus: PI-PLC X domain-containing protein At5g67130 (426 aa).

Residues 1 to 28 form the signal peptide; that stretch reads MSACINGLCRAVTVSLLLLLLSFSFSSA. Residues 76 to 232 form the PI-PLC X-box domain; the sequence is IINGLPFNKY…MVQENHRLLV (157 aa). Asn151 and Asn255 each carry an N-linked (GlcNAc...) asparagine glycan. The segment at 258–277 is disordered; that stretch reads GDPGVKRGSCPNRKESQPLN. An N-linked (GlcNAc...) asparagine glycan is attached at Asn370. Ser404 is lipidated: GPI-anchor amidated serine. Residues 405–426 constitute a propeptide, removed in mature form; the sequence is VAQLNNIVVFCFSLLPLLIFLL.

It is found in the cell membrane. In Arabidopsis thaliana (Mouse-ear cress), this protein is PI-PLC X domain-containing protein At5g67130.